Consider the following 63-residue polypeptide: Overexpressed in colon carcinoma 1 protein homolog (63 aa).

Low complexity predominate over residues methionine 1 to glycine 12. The interval methionine 1 to glycine 40 is disordered.

This sequence belongs to the OCC1 family.

The protein is Overexpressed in colon carcinoma 1 protein homolog of Bos taurus (Bovine).